Consider the following 328-residue polypeptide: Flap endonuclease 1 (328 aa).

Residues 1 to 98 (MGVKFKDITN…ETQEERINIK (98 aa)) form an N-domain region. D27, D80, E152, E154, D173, D175, and D227 together coordinate Mg(2+). The segment at 116–248 (AARKYAARTT…KGIKLIHKYG (133 aa)) is I-domain. Residues 320–328 (AQSSLEDWF) form an interaction with PCNA region.

It belongs to the XPG/RAD2 endonuclease family. FEN1 subfamily. As to quaternary structure, interacts with PCNA. PCNA stimulates the nuclease activity without altering cleavage specificity. Mg(2+) serves as cofactor.

Its function is as follows. Structure-specific nuclease with 5'-flap endonuclease and 5'-3' exonuclease activities involved in DNA replication and repair. During DNA replication, cleaves the 5'-overhanging flap structure that is generated by displacement synthesis when DNA polymerase encounters the 5'-end of a downstream Okazaki fragment. Binds the unpaired 3'-DNA end and kinks the DNA to facilitate 5' cleavage specificity. Cleaves one nucleotide into the double-stranded DNA from the junction in flap DNA, leaving a nick for ligation. Also involved in the base excision repair (BER) pathway. Acts as a genome stabilization factor that prevents flaps from equilibrating into structures that lead to duplications and deletions. Also possesses 5'-3' exonuclease activity on nicked or gapped double-stranded DNA. The chain is Flap endonuclease 1 from Methanosphaera stadtmanae (strain ATCC 43021 / DSM 3091 / JCM 11832 / MCB-3).